The following is a 728-amino-acid chain: Catalase-peroxidase 1 (728 aa).

The N-terminal stretch at 1 to 16 (MDKAQHTQGKCPVAHG) is a signal peptide. Positions 97 to 225 (WHSAGTYRMA…LAAVMMGLIY (129 aa)) form a cross-link, tryptophyl-tyrosyl-methioninium (Trp-Tyr) (with M-251). The active-site Proton acceptor is the His98. The tryptophyl-tyrosyl-methioninium (Tyr-Met) (with W-97) cross-link spans 225–251 (YVNPEGVDGQPDPLKTAQDIRVTFERM). A heme b-binding site is contributed by His266.

Belongs to the peroxidase family. Peroxidase/catalase subfamily. Homodimer or homotetramer. Requires heme b as cofactor. In terms of processing, formation of the three residue Trp-Tyr-Met cross-link is important for the catalase, but not the peroxidase activity of the enzyme.

It carries out the reaction H2O2 + AH2 = A + 2 H2O. It catalyses the reaction 2 H2O2 = O2 + 2 H2O. Bifunctional enzyme with both catalase and broad-spectrum peroxidase activity. The polypeptide is Catalase-peroxidase 1 (Shewanella frigidimarina (strain NCIMB 400)).